A 553-amino-acid chain; its full sequence is Probable inactive serine/threonine-protein kinase samkD (553 aa).

The SAM domain maps to 24–90; the sequence is WDNETVCKWL…FEYQILKNCY (67 aa). One can recognise a Protein kinase domain in the interval 134-393; that stretch reads YQYIETISKN…SKELLKSFWF (260 aa). Residues 140–148 and Lys165 contribute to the ATP site; that span reads ISKNKFCEI.

The protein belongs to the protein kinase superfamily. Ser/Thr protein kinase family.

The polypeptide is Probable inactive serine/threonine-protein kinase samkD (samkD) (Dictyostelium discoideum (Social amoeba)).